Here is a 477-residue protein sequence, read N- to C-terminus: Zinc metalloproteinase/disintegrin (477 aa).

Positions 1–19 (MIQVLLVIICLAVPYQGSS) are cleaved as a signal peptide. A propeptide spanning residues 20-186 (IILESGNVND…PIKKASQSNL (167 aa)) is cleaved from the precursor. The Peptidase M12B domain maps to 192–388 (RYIELVIVAD…QKPQCILNKP (197 aa)). Glu-195 and Asp-279 together coordinate Ca(2+). 3 disulfides stabilise this stretch: Cys-303–Cys-383, Cys-343–Cys-367, and Cys-345–Cys-350. His-328 contacts Zn(2+). The active site involves Glu-329. Zn(2+)-binding residues include His-332 and His-338. Cys-383 and Asn-386 together coordinate Ca(2+). A propeptide spanning residues 389–404 (LRTDTVSTPVSGNELL) is cleaved from the precursor. The Disintegrin domain maps to 396-477 (TPVSGNELLE…AGCPRNPFHA (82 aa)). 6 cysteine pairs are disulfide-bonded: Cys-410/Cys-425, Cys-412/Cys-420, Cys-419/Cys-442, Cys-433/Cys-439, Cys-438/Cys-463, and Cys-451/Cys-470. Residues 455 to 457 (RGD) carry the Cell attachment site motif.

Belongs to the venom metalloproteinase (M12B) family. P-II subfamily. P-IIa sub-subfamily. Monomer. Zn(2+) serves as cofactor. In terms of tissue distribution, expressed by the venom gland.

The protein localises to the secreted. Functionally, impairs hemostasis in the envenomed animal. In terms of biological role, inhibits platelet aggregation induced by ADP, thrombin, platelet-activating factor and collagen. Acts by inhibiting fibrinogen interaction with platelet receptors GPIIb/GPIIIa (ITGA2B/ITGB3). The sequence is that of Zinc metalloproteinase/disintegrin from Gloydius halys (Chinese water mocassin).